We begin with the raw amino-acid sequence, 366 residues long: Galactoside alpha-(1,2)-fucosyltransferase 1 (366 aa).

Residues 1–8 (MWPLSHRH) lie on the Cytoplasmic side of the membrane. The chain crosses the membrane as a helical; Signal-anchor for type II membrane protein span at residues 9–25 (LCLAFLLVCVLSAISFF). Residues 26–366 (LHVHQDSFRH…LSPLWTLAEP (341 aa)) lie on the Lumenal side of the membrane. N-linked (GlcNAc...) asparagine glycosylation is found at N66, N302, and N328.

The protein belongs to the glycosyltransferase 11 family.

It localises to the golgi apparatus. Its subcellular location is the golgi stack membrane. It catalyses the reaction a beta-D-galactosyl-(1-&gt;4)-N-acetyl-beta-D-glucosaminyl derivative + GDP-beta-L-fucose = an alpha-L-Fuc-(1-&gt;2)-beta-D-Gal-(1-&gt;4)-beta-D-GlcNAc derivative + GDP + H(+). The enzyme catalyses a ganglioside GA1 + GDP-beta-L-fucose = a ganglioside Fuc-GA1 + GDP + H(+). The catalysed reaction is a beta-D-Gal-(1-&gt;3)-beta-D-GlcNAc-(1-&gt;3)-beta-D-Gal-(1-&gt;4)-beta-D-Glc-(1&lt;-&gt;1')-Cer(d18:1(4E)) + GDP-beta-L-fucose = alpha-L-fucosyl-(1-&gt;2)- beta-D-galactosyl-(1-&gt;3)-N-acetyl-beta-D-glucosaminyl-(1-&gt;3)-beta-D-galactosyl-(1-&gt;4)-beta-D-glucosyl-(1&lt;-&gt;1')-N-acylsphing-4-enine + GDP + H(+). It carries out the reaction a neolactoside nLc4Cer(d18:1(4E)) + GDP-beta-L-fucose = a neolactoside IV(2)-alpha-Fuc-nLc4Cer(d18:1(4E)) + GDP + H(+). It catalyses the reaction a ganglioside GM1 + GDP-beta-L-fucose = a ganglioside Fuc-GM1 + GDP + H(+). The enzyme catalyses beta-D-galactosyl-(1-&gt;3)-N-acetyl-D-galactosamine + GDP-beta-L-fucose = alpha-L-fucosyl-(1-&gt;2)-beta-D-galactosyl-(1-&gt;3)-N-acetyl-D-galactosamine + GDP + H(+). The protein operates within protein modification; protein glycosylation. Functionally, catalyzes the transfer of L-fucose, from a guanosine diphosphate-beta-L-fucose, to the terminal galactose residue of glycoconjugates through an alpha(1,2) linkage leading to H antigen synthesis that is an intermediate substrate in the synthesis of ABO blood group antigens. H antigen is essential for maturation of the glomerular layer of the main olfactory bulb, in cell migration and early cell-cell contacts during tumor associated angiogenesis. Preferentially fucosylates soluble lactose and to a lesser extent fucosylates glycolipids gangliosides GA1 and GM1a. This is Galactoside alpha-(1,2)-fucosyltransferase 1 from Alouatta belzebul (Red-handed howler monkey).